Reading from the N-terminus, the 452-residue chain is Phosphoglucosamine mutase (452 aa).

Ser108 (phosphoserine intermediate) is an active-site residue. Mg(2+) is bound by residues Ser108, Asp247, Asp249, and Asp251. A Phosphoserine modification is found at Ser108.

The protein belongs to the phosphohexose mutase family. The cofactor is Mg(2+). Post-translationally, activated by phosphorylation.

It carries out the reaction alpha-D-glucosamine 1-phosphate = D-glucosamine 6-phosphate. In terms of biological role, catalyzes the conversion of glucosamine-6-phosphate to glucosamine-1-phosphate. The protein is Phosphoglucosamine mutase of Burkholderia mallei (strain NCTC 10247).